Consider the following 80-residue polypeptide: Conotoxin MaIr193 (80 aa).

The N-terminal stretch at 1–22 (MKLTCMMIVAVLFLTAWTLVTA) is a signal peptide. A propeptide spanning residues 23–51 (DGTRDGLKNRFPKARLEMKNSEAPRSRGR) is cleaved from the precursor. 3 cysteine pairs are disulfide-bonded: C52-C69, C59-C73, and C68-C77. P64 carries the post-translational modification 4-hydroxyproline.

This sequence belongs to the conotoxin O1 superfamily. In terms of tissue distribution, expressed by the venom duct.

The protein localises to the secreted. This Conus marmoreus (Marble cone) protein is Conotoxin MaIr193.